The chain runs to 70 residues: MTTKITGLVKWFNPEKGFGFITPKDGSKDVFVHFSAIQSNEFRTLNENQEVEFSAEQGPKGPSAVNVVAL.

A CSD domain is found at 7–67 (GLVKWFNPEK…GPKGPSAVNV (61 aa)).

Its subcellular location is the cytoplasm. The polypeptide is Cold shock-like protein CspJ (cspJ) (Salmonella typhi).